The chain runs to 721 residues: MATTVVAPPGAVSDRANKRGGGPGGGGGGGGARGAEEESPPPLQAVLVADSFNRRFFPISKDQPRVLLPLANVALIDYTLEFLTATGVQETFVFCCWKAAQIKEHLQKSKWCRPTSLNVVRIITSELYRSLGDVLRDVDAKALVRSDFLLVYGDVVSNINVTRALEEHRLRRKLEKNVSVMTMIFKESSPSHPTRCHEDNVVVAVDSATNRILHFQKTQGLRRFSFPLSLFQGSGAGVEIRYDLLDCHISICSPQVAQLFTDNFDYQTRDDFVRGLLVNEEILGNQIHMHVTTREYGARVSNLHMYSAVCADVIRRWVYPLTPEANFTDSTAQSCTHSRHNIYRGPEVSLGHGSILEENVLLGSGTVIGSNCSITNSVIGPGCCIGDNVVLDRAYLWKGVQVASGAQIHQSLLCDHAEVKEQVTLKPHCVLTSQVVVGPNITLPEGSVISLHPPDAEEDEDDGQFSDDSGVNQAKEKAKLKGYNPAEVGVAGKGYLWKAADMNTEKEEELRQSLWGLTINEEEESETESERSMDSEELDSRAGSPQLDDIKVFQNEVLGTLQRGKEESISCDNLILEINSLKYAYNISLKEVMQVLSHVVLEFPLQQMDSPLEANRYCALLLPLLKAWSPVFRNYIKRAADHLEALAAIEEFFLEHEALGTCIAKVLMGFYQLEILAEETILSWFGQRDVTDKGRQLRKNQQLQRFIQWLKEAEEESSEDD.

The segment at 1 to 40 (MATTVVAPPGAVSDRANKRGGGPGGGGGGGGARGAEEESP) is disordered. Ala-2 is modified (N-acetylalanine). Arg-19 is modified (omega-N-methylarginine). The segment covering 19 to 33 (RGGGPGGGGGGGGAR) has biased composition (gly residues). Glycyl lysine isopeptide (Lys-Gly) (interchain with G-Cter in ubiquitin) cross-links involve residues Lys-61 and Lys-103. The residue at position 130 (Ser-130) is a Phosphoserine. Glycyl lysine isopeptide (Lys-Gly) (interchain with G-Cter in ubiquitin) cross-links involve residues Lys-141 and Lys-217. Position 322 is a phosphothreonine (Thr-322). 2 disordered regions span residues 446–478 (GSVISLHPPDAEEDEDDGQFSDDSGVNQAKEKA) and 517–545 (LTINEEEESETESERSMDSEELDSRAGSP). The residue at position 450 (Ser-450) is a Phosphoserine. Positions 456–465 (AEEDEDDGQF) are enriched in acidic residues. Ser-466, Ser-469, Ser-532, and Ser-540 each carry phosphoserine. Residues 528–540 (ESERSMDSEELDS) show a composition bias toward basic and acidic residues. In terms of domain architecture, W2 spans 543-720 (GSPQLDDIKV…KEAEEESSED (178 aa)). Ser-544 carries the phosphoserine; by DYRK2 modification. Ser-717 carries the phosphoserine modification.

Belongs to the eIF-2B gamma/epsilon subunits family. In terms of assembly, component of the translation initiation factor 2B (eIF2B) complex which is a heterodecamer of two sets of five different subunits: alpha, beta, gamma, delta and epsilon. Subunits alpha, beta and delta comprise a regulatory subcomplex and subunits epsilon and gamma comprise a catalytic subcomplex. Within the complex, the hexameric regulatory complex resides at the center, with the two heterodimeric catalytic subcomplexes bound on opposite sides. Phosphorylated at Ser-544 by DYRK2; this is required for subsequent phosphorylation by GSK3B. Phosphorylated on serine and threonine residues by GSK3B; phosphorylation inhibits its function. In terms of processing, polyubiquitinated, probably by NEDD4. Ubiquitously expressed.

It is found in the cytoplasm. The protein localises to the cytosol. With respect to regulation, activated by the chemical integrated stress response (ISR) inhibitor ISRIB which stimulates guanine nucleotide exchange factor activity for both phosphorylated and unphosphorylated eIF2. Its function is as follows. Acts as a component of the translation initiation factor 2B (eIF2B) complex, which catalyzes the exchange of GDP for GTP on eukaryotic initiation factor 2 (eIF2) gamma subunit. Its guanine nucleotide exchange factor activity is repressed when bound to eIF2 complex phosphorylated on the alpha subunit, thereby limiting the amount of methionyl-initiator methionine tRNA available to the ribosome and consequently global translation is repressed. This chain is Translation initiation factor eIF2B subunit epsilon (EIF2B5), found in Oryctolagus cuniculus (Rabbit).